The primary structure comprises 568 residues: Glucose-6-phosphate isomerase, cytosolic 1 (568 aa).

Glu360 (proton donor) is an active-site residue. Residues His391 and Lys516 contribute to the active site.

It belongs to the GPI family. As to quaternary structure, homodimer.

The protein localises to the cytoplasm. The enzyme catalyses alpha-D-glucose 6-phosphate = beta-D-fructose 6-phosphate. It participates in carbohydrate degradation; glycolysis; D-glyceraldehyde 3-phosphate and glycerone phosphate from D-glucose: step 2/4. The protein is Glucose-6-phosphate isomerase, cytosolic 1 (PGIC1) of Clarkia arcuata (Glandular clarkia).